Consider the following 502-residue polypeptide: Maturase K (502 aa).

It belongs to the intron maturase 2 family. MatK subfamily.

The protein resides in the plastid. Its subcellular location is the chloroplast. Usually encoded in the trnK tRNA gene intron. Probably assists in splicing its own and other chloroplast group II introns. This chain is Maturase K, found in Vitis vinifera (Grape).